We begin with the raw amino-acid sequence, 251 residues long: L,D-transpeptidase 1 (251 aa).

An N-terminal signal peptide occupies residues 1–28 (MRRVVRYLSVVVAITLMLTAESVSIATA). Positions 125–250 (LIGVASISAH…VTVGDPIEVV (126 aa)) constitute a L,D-TPase catalytic domain. Substrate is bound by residues tyrosine 190 and 203–204 (SG). Residue histidine 208 is the Proton donor/acceptor of the active site. Cysteine 226 serves as the catalytic Nucleophile. Residue asparagine 228 coordinates substrate.

As to quaternary structure, monomer.

It localises to the periplasm. It participates in cell wall biogenesis; peptidoglycan biosynthesis. Is irreversibly inactivated by the beta-lactams carbapenems via the formation of a covalent adduct resulting from acylation of the catalytic Cys. In terms of biological role, generates 3-&gt;3 cross-links in peptidoglycan, catalyzing the cleavage of the mDap(3)-D-Ala(4) bond of a tetrapeptide donor stem and the formation of a bond between the carbonyl of mDap(3) of the donor stem and the side chain of mDap(3) of the acceptor stem. Is specific for donor substrates containing a stem tetrapeptide since it cannot use pentapeptide stems. The chain is L,D-transpeptidase 1 (ldtA) from Mycobacterium tuberculosis (strain CDC 1551 / Oshkosh).